Consider the following 457-residue polypeptide: Peptidyl-prolyl cis-trans isomerase FKBP5 (457 aa).

Met1 is modified (N-acetylmethionine). A disordered region spans residues 1-26 (MTTDEGAKNSRGNPAATVAEQGEDVT). Lys28 is modified (N6-acetyllysine). 2 consecutive PPIase FKBP-type domains span residues 50–138 (GDRV…LDFK) and 165–251 (GARV…KSFE). TPR repeat units follow at residues 268–301 (AAIV…LEME), 317–350 (LAAF…DSAN), and 351–384 (EKGL…NPQN). The interval 421–457 (AKEEANKAMSKKTSEGVTNEKLTASHAVEEEKPEGHV) is disordered. The residue at position 445 (Ser445) is a Phosphoserine. The segment covering 447-457 (AVEEEKPEGHV) has biased composition (basic and acidic residues).

Part of a heteromultimeric cytoplasmic complex with HSP90AA1, HSPA1A/HSPA1B and steroid receptors. Upon ligand binding dissociates from the complex and FKBP4 takes its place. Interacts with functionally mature heterooligomeric progesterone receptor complexes along with HSP90 and TEBP. Interacts with NR3C1. Interacts with Akt/AKT1 and PHLPP1; enhancing dephosphorylation and subsequent activation of Akt/AKT1. Interacts with IFI44L; this interaction modulates the kinase activity of IKBKB and IKBKE. Interacts with IKBKB and IKBKE. Acetylation impairs ability to promote interaction between Akt/AKT1 and PHLPP1. Deacetylation by SIRT7 promotes interaction between Akt/AKT1 and PHLPP1, leading to suppress Akt/AKT1 activation. In terms of processing, ubiquitinated, leading to degradation in a proteasome-dependent manner. Deubiquitinated by USP49, leading to stabilization.

It is found in the cytoplasm. The protein localises to the nucleus. The catalysed reaction is [protein]-peptidylproline (omega=180) = [protein]-peptidylproline (omega=0). Its activity is regulated as follows. Inhibited by both FK506 and rapamycin. Its function is as follows. Immunophilin protein with PPIase and co-chaperone activities. Component of unligated steroid receptors heterocomplexes through interaction with heat-shock protein 90 (HSP90). Plays a role in the intracellular trafficking of heterooligomeric forms of steroid hormone receptors maintaining the complex into the cytoplasm when unliganded. Acts as a regulator of Akt/AKT1 activity by promoting the interaction between Akt/AKT1 and PHLPP1, thereby enhancing dephosphorylation and subsequent activation of Akt/AKT1. Interacts with IKBKE and IKBKB which facilitates IKK complex assembly leading to increased IKBKE and IKBKB kinase activity, NF-kappaB activation, and IFN production. The polypeptide is Peptidyl-prolyl cis-trans isomerase FKBP5 (FKBP5) (Saimiri boliviensis boliviensis (Bolivian squirrel monkey)).